Here is a 91-residue protein sequence, read N- to C-terminus: Elongation factor 1-beta (91 aa).

It belongs to the EF-1-beta/EF-1-delta family.

In terms of biological role, promotes the exchange of GDP for GTP in EF-1-alpha/GDP, thus allowing the regeneration of EF-1-alpha/GTP that could then be used to form the ternary complex EF-1-alpha/GTP/AAtRNA. The polypeptide is Elongation factor 1-beta (Metallosphaera sedula (strain ATCC 51363 / DSM 5348 / JCM 9185 / NBRC 15509 / TH2)).